We begin with the raw amino-acid sequence, 855 residues long: DNA mismatch repair protein MutS (855 aa).

ATP is bound at residue 616–623 (GPNMGGKS).

Belongs to the DNA mismatch repair MutS family.

In terms of biological role, this protein is involved in the repair of mismatches in DNA. It is possible that it carries out the mismatch recognition step. This protein has a weak ATPase activity. This chain is DNA mismatch repair protein MutS, found in Escherichia coli O139:H28 (strain E24377A / ETEC).